The chain runs to 375 residues: uncharacterized protein (375 aa).

A signal peptide spans 1 to 20 (MKNKLFIILIIFIILKIVIC). The Extracellular segment spans residues 21 to 335 (QNTTPSKLIP…EKQVERKITP (315 aa)). Positions 30 to 42 (PQQQQKQKQQQTQ) are enriched in low complexity. Disordered regions lie at residues 30-74 (PQQQ…QPQQ) and 113-253 (SQNV…PHNH). The span at 43–53 (PHHHHHHHQQH) shows a compositional bias: basic residues. Low complexity predominate over residues 54 to 74 (QQHQQQHQPNQQIKQQQQPQQ). Residues 120–151 (PPHHTQQRVPHHHGPNGAPHHHGPNGAPHHHG) show a composition bias toward basic residues. The span at 168–180 (GHNTQGHVQTNHV) shows a compositional bias: polar residues. Residues 181–220 (NNINKNNINNNNNNNNNNNNNNNNNNNNNINDNKNIRNNI) show a composition bias toward low complexity. A helical membrane pass occupies residues 336 to 356 (IMVLYILLASTMVIQLFIMVF). Residues 357–375 (KQVKHIREINAKTTMESLL) lie on the Cytoplasmic side of the membrane.

The protein resides in the membrane. This is an uncharacterized protein from Dictyostelium discoideum (Social amoeba).